A 562-amino-acid chain; its full sequence is Arginine--tRNA ligase (562 aa).

The 'HIGH' region signature appears at 129-139; that stretch reads ANPTGPLHVGH.

The protein belongs to the class-I aminoacyl-tRNA synthetase family. Monomer.

Its subcellular location is the cytoplasm. The enzyme catalyses tRNA(Arg) + L-arginine + ATP = L-arginyl-tRNA(Arg) + AMP + diphosphate. This is Arginine--tRNA ligase from Xylella fastidiosa (strain M12).